Reading from the N-terminus, the 563-residue chain is Solute carrier family 22 member 6 (563 aa).

Residues 1–9 (MAFNDLLQQ) lie on the Cytoplasmic side of the membrane. The chain crosses the membrane as a helical span at residues 10-30 (VGGVGRFQQIQVTLVVLPLLL). The Extracellular portion of the chain corresponds to 31-135 (MASHNTLQNF…LVCSHRALRQ (105 aa)). N-linked (GlcNAc...) asparagine glycosylation is found at Asn39, Asn56, Asn92, Asn97, and Asn113. Residues 136–156 (LAQSLYMVGVLLGAMVFGYLA) form a helical membrane-spanning segment. The Cytoplasmic segment spans residues 157 to 164 (DRLGRRKV). Residues 165 to 187 (LILNYLQTAVSGTCAAFAPNFPI) traverse the membrane as a helical segment. Residues 188–190 (YCA) lie on the Extracellular side of the membrane. A helical membrane pass occupies residues 191–213 (FRLLSGMALAGISLNCMTLNVEW). The Cytoplasmic portion of the chain corresponds to 214 to 224 (MPIHTRACVGT). A helical membrane pass occupies residues 225–245 (LIGYVYSLGQFLLAGVAYAVP). The Extracellular portion of the chain corresponds to 246 to 248 (HWR). Residues 249–269 (HLQLLVSAPFFAFFIYSWFFI) traverse the membrane as a helical segment. At 270–337 (ESARWHSSSG…ELLRCPTLRH (68 aa)) the chain is on the cytoplasmic side. Residues 338–358 (LFLCLSMLWFATSFAYYGLVM) form a helical membrane-spanning segment. The Extracellular segment spans residues 359–368 (DLQGFGVSIY). A helical transmembrane segment spans residues 369-389 (LIQVIFGAVDLPAKLVGFLVI). The Cytoplasmic portion of the chain corresponds to 390-395 (NSLGRR). Residues 396 to 416 (PAQMAALLLAGICILLNGVIP) traverse the membrane as a helical segment. Over 417-425 (QDQSIVRTS) the chain is Extracellular. A helical transmembrane segment spans residues 426 to 446 (LAVLGKGCLAASFNCIFLYTG). Topologically, residues 447-455 (ELYPTMIRQ) are cytoplasmic. A helical membrane pass occupies residues 456–475 (TGMGMGSTMARVGSIVSPLV). At 476-484 (SMTAELYPS) the chain is on the extracellular side. A helical transmembrane segment spans residues 485–505 (MPLFIYGAVPVAASAVTVLLP). Residues 506–563 (ETLGQPLPDTVQDLESRWAPTQKEAGIYPRKGKQTRQQQEHQKYMVPLQASAQEKNGL) are Cytoplasmic-facing. The interval 525–563 (PTQKEAGIYPRKGKQTRQQQEHQKYMVPLQASAQEKNGL) is disordered.

Belongs to the major facilitator (TC 2.A.1) superfamily. Organic cation transporter (TC 2.A.1.19) family. In terms of processing, glycosylated. Glycosylation at Asn-113 may occur at a secondary level. Glycosylation is necessary for proper targeting of the transporter to the plasma membrane. As to expression, strongly expressed in kidney. Expressed at lower level in liver, skeletal muscle, brain and placenta. In kidney, found at the basolateral membrane of the proximal tubule. In testis, primarily localized to the basal membrane of Sertoli cells and weakly expressed in Leydig cells and vascular endothelial cells.

The protein resides in the basolateral cell membrane. Its subcellular location is the basal cell membrane. The enzyme catalyses (6R)-L-erythro-5,6,7,8-tetrahydrobiopterin(out) + a dicarboxylate(in) = (6R)-L-erythro-5,6,7,8-tetrahydrobiopterin(in) + a dicarboxylate(out). The catalysed reaction is L-erythro-7,8-dihydrobiopterin(out) + a dicarboxylate(in) = L-erythro-7,8-dihydrobiopterin(in) + a dicarboxylate(out). It carries out the reaction L-sepiapterin(out) + a dicarboxylate(in) = L-sepiapterin(in) + a dicarboxylate(out). It catalyses the reaction prostaglandin F2alpha(out) + a dicarboxylate(in) = prostaglandin F2alpha(in) + a dicarboxylate(out). The enzyme catalyses prostaglandin E2(out) + a dicarboxylate(in) = prostaglandin E2(in) + a dicarboxylate(out). The catalysed reaction is 3',5'-cyclic AMP(out) + a dicarboxylate(in) = 3',5'-cyclic AMP(in) + a dicarboxylate(out). It carries out the reaction 3',5'-cyclic GMP(out) + a dicarboxylate(in) = 3',5'-cyclic GMP(in) + a dicarboxylate(out). It catalyses the reaction urate(out) + a dicarboxylate(in) = urate(in) + a dicarboxylate(out). The enzyme catalyses kynurenate(out) + glutarate(in) = kynurenate(in) + glutarate(out). The catalysed reaction is (indol-3-yl)acetate(out) + a dicarboxylate(in) = (indol-3-yl)acetate(in) + a dicarboxylate(out). It carries out the reaction indoxyl sulfate(out) + a dicarboxylate(in) = indoxyl sulfate(in) + a dicarboxylate(out). It catalyses the reaction N-benzoylglycine(out) + a dicarboxylate(in) = N-benzoylglycine(in) + a dicarboxylate(out). The enzyme catalyses 3-carboxy-4-methyl-5-propyl-2-furanpropanoate(out) + a dicarboxylate(in) = 3-carboxy-4-methyl-5-propyl-2-furanpropanoate(in) + a dicarboxylate(out). Functionally, secondary active transporter that functions as a Na(+)-independent organic anion (OA)/dicarboxylate antiporter where the uptake of one molecule of OA into the cell is coupled with an efflux of one molecule of intracellular dicarboxylate such as 2-oxoglutarate or glutarate. Mediates the uptake of OA across the basolateral side of proximal tubule epithelial cells, thereby contributing to the renal elimination of endogenous OA from the systemic circulation into the urine. Functions as a biopterin transporters involved in the uptake and the secretion of coenzymes tetrahydrobiopterin (BH4), dihydrobiopterin (BH2) and sepiapterin to urine, thereby determining baseline levels of blood biopterins. Transports prostaglandin E2 (PGE2) and prostaglandin F2-alpha (PGF2-alpha) and may contribute to their renal excretion. Also mediates the uptake of cyclic nucleotides such as cAMP and cGMP. Involved in the transport of neuroactive tryptophan metabolites kynurenate (KYNA) and xanthurenate (XA) and may contribute to their secretion from the brain. May transport glutamate. Also involved in the disposition of uremic toxins and potentially toxic xenobiotics by the renal organic anion secretory pathway, helping reduce their undesired toxicological effects on the body. Uremic toxins include the indoxyl sulfate (IS), hippurate/N-benzoylglycine (HA), indole acetate (IA), 3-carboxy-4- methyl-5-propyl-2-furanpropionate (CMPF) and urate. Xenobiotics include the mycotoxin ochratoxin (OTA). May also contribute to the transport of organic compounds in testes across the blood-testis-barrier. This Homo sapiens (Human) protein is Solute carrier family 22 member 6.